The chain runs to 760 residues: MSWFVDLAGKAEDFLNKVDQGAATALTKPNQKSSLSYNSPDATDSTQYNAAAYSSTQQHRDSISASSLGTSTFISAAAGNIKKSKATVLAGTANVSSTTPLGSSSKASSNFVRPRKSEVNDDLLFDFLNSSDPPQSEKKEVRRETVSKAFSPTGVSAQSQMPTVSLASDLHTGPSVTPTPSSTQGLSRNSSLGSLSSSSHSVKTEDSSTRDQSQADVPESLTAGLDDLADPQPVLEIQSQDLQQQQQQQGQEHVISNLRLENQLLRNEVSSLNQEMASLIQRAKDMQEEVNLGRARADKWNSDQSRVDRTVRELSSQVDDLTEALSAKDGQLAVLKVRLDEADQLLKARSSALEEAQNERVRILQDHSEGSSLHSQAVQTLQDRLRDAEAAVKREQESYRQIQSEFAARLAKVEAERQTLAESLTNAERRLTEEKQRAEDLQQQAKSSRSAAEYTKQELQDYKNKASRILQSKEKLINSLKEGSGLEVLEGAGAGVELEELRHEKELQREEIQKLQAQIQSLRTEIQDLETQALTENESWREQLAEVQEQHAQQIRAKQEIEAELERSKQELQYIEEEHHRTKITLQGRVKDREDEIQKLRNQLTNKALSNSSQAELEGRLHQLTETLIQKQTMLEALGTEKNSLVFQLERLEQQLKSLQGGQNSASHINMAAMEGPGARQRNTPILFSDGDGPGTGVYGKVRKAASTIDRFSIRLGIFLRRYPMARVFVIIYMALLHLWVMIVLLTYTPEMHHSHPDGR.

Over 1-727 the chain is Cytoplasmic; it reads MSWFVDLAGK…IFLRRYPMAR (727 aa). Residues 95-111 are compositionally biased toward polar residues; that stretch reads VSSTTPLGSSSKASSNF. Disordered regions lie at residues 95-114, 126-216, and 432-456; these read VSST…FVRP, DFLN…SQAD, and TEEK…EYTK. A compositionally biased stretch (basic and acidic residues) spans 135–146; that stretch reads QSEKKEVRRETV. A compositionally biased stretch (polar residues) spans 148-166; sequence KAFSPTGVSAQSQMPTVSL. The span at 174 to 201 shows a compositional bias: low complexity; that stretch reads PSVTPTPSSTQGLSRNSSLGSLSSSSHS. A coiled-coil region spans residues 249-668; it reads QGQEHVISNL…LQGGQNSASH (420 aa). Positions 441-450 are enriched in polar residues; the sequence is LQQQAKSSRS. Residues 728–748 form a helical; Anchor for type IV membrane protein membrane-spanning segment; it reads VFVIIYMALLHLWVMIVLLTY. Topologically, residues 749–760 are extracellular; that stretch reads TPEMHHSHPDGR.

The protein localises to the golgi apparatus membrane. In terms of biological role, involved in maintaining Golgi structure. Stimulates the formation of Golgi stacks and ribbons. Involved in intra-Golgi retrograde transport. The protein is Golgin subfamily A member 5 (golga5) of Danio rerio (Zebrafish).